Reading from the N-terminus, the 667-residue chain is UvrABC system protein C (667 aa).

The region spanning 43 to 122 is the GIY-YIG domain; sequence AEPGCYLMRD…IKNQQPHFNV (80 aa). The 36-residue stretch at 232–267 folds into the UVR domain; it reads QELKVLLEKQMERYSDRMDYESAANIRDQIKGLEQL.

Belongs to the UvrC family. Interacts with UvrB in an incision complex.

The protein localises to the cytoplasm. In terms of biological role, the UvrABC repair system catalyzes the recognition and processing of DNA lesions. UvrC both incises the 5' and 3' sides of the lesion. The N-terminal half is responsible for the 3' incision and the C-terminal half is responsible for the 5' incision. This is UvrABC system protein C from Prochlorococcus marinus (strain MIT 9313).